We begin with the raw amino-acid sequence, 364 residues long: Histidinol-phosphate aminotransferase (364 aa).

Lys-226 carries the post-translational modification N6-(pyridoxal phosphate)lysine.

The protein belongs to the class-II pyridoxal-phosphate-dependent aminotransferase family. Histidinol-phosphate aminotransferase subfamily. As to quaternary structure, homodimer. Pyridoxal 5'-phosphate serves as cofactor.

The catalysed reaction is L-histidinol phosphate + 2-oxoglutarate = 3-(imidazol-4-yl)-2-oxopropyl phosphate + L-glutamate. The protein operates within amino-acid biosynthesis; L-histidine biosynthesis; L-histidine from 5-phospho-alpha-D-ribose 1-diphosphate: step 7/9. In Sulfurimonas denitrificans (strain ATCC 33889 / DSM 1251) (Thiomicrospira denitrificans (strain ATCC 33889 / DSM 1251)), this protein is Histidinol-phosphate aminotransferase.